We begin with the raw amino-acid sequence, 229 residues long: Thiamine import ATP-binding protein ThiQ (229 aa).

The ABC transporter domain occupies 2 to 229 (LHLENIRVRQ…NNAEPLRPWM (228 aa)). 32 to 39 (GASGSGKS) serves as a coordination point for ATP.

It belongs to the ABC transporter superfamily. Thiamine importer (TC 3.A.1.19.1) family. The complex is composed of two ATP-binding proteins (ThiQ), two transmembrane proteins (ThiP) and a solute-binding protein (ThiB).

The protein localises to the cell inner membrane. It catalyses the reaction thiamine(out) + ATP + H2O = thiamine(in) + ADP + phosphate + H(+). Its function is as follows. Part of the ABC transporter complex ThiBPQ involved in thiamine import. Responsible for energy coupling to the transport system. This Jannaschia sp. (strain CCS1) protein is Thiamine import ATP-binding protein ThiQ.